We begin with the raw amino-acid sequence, 399 residues long: Fructose-bisphosphate aldolase 1, chloroplastic (399 aa).

Residues 1 to 48 (MASSTATMLKASPVKSDWVKGQSLLLRQPSSVSAIRSHVAPSALTVRA) constitute a chloroplast transit peptide. Position 96 (Arg-96) interacts with substrate. Ser-158 is subject to Phosphoserine. Position 186 (Lys-186) interacts with substrate. Phosphoserine is present on Ser-216. Glu-226 serves as the catalytic Proton acceptor. Lys-268 acts as the Schiff-base intermediate with dihydroxyacetone-P in catalysis. 310 to 312 (SGG) is a binding site for substrate. Lys-395 bears the N6,N6,N6-trimethyllysine mark.

It belongs to the class I fructose-bisphosphate aldolase family. In terms of assembly, homotetramer. Can be trimethylated at Lys-395 by LSMT-L, but the trimethylation has no effect in vitro on the kinetic properties of the enzyme. Post-translationally, S-glutathionylated. Highly expressed in rosettes leaves and cauline leaves.

The protein resides in the plastid. The protein localises to the chloroplast. Its subcellular location is the plastoglobule. It is found in the chloroplast stroma. The enzyme catalyses beta-D-fructose 1,6-bisphosphate = D-glyceraldehyde 3-phosphate + dihydroxyacetone phosphate. It functions in the pathway carbohydrate degradation; glycolysis; D-glyceraldehyde 3-phosphate and glycerone phosphate from D-glucose: step 4/4. Plays a key role in glycolysis and gluconeogenesis. This chain is Fructose-bisphosphate aldolase 1, chloroplastic, found in Arabidopsis thaliana (Mouse-ear cress).